A 1342-amino-acid polypeptide reads, in one-letter code: DNA-directed RNA polymerase subunit beta (1342 aa).

This sequence belongs to the RNA polymerase beta chain family. In terms of assembly, the RNAP catalytic core consists of 2 alpha, 1 beta, 1 beta' and 1 omega subunit. When a sigma factor is associated with the core the holoenzyme is formed, which can initiate transcription.

The enzyme catalyses RNA(n) + a ribonucleoside 5'-triphosphate = RNA(n+1) + diphosphate. Functionally, DNA-dependent RNA polymerase catalyzes the transcription of DNA into RNA using the four ribonucleoside triphosphates as substrates. This Salmonella typhimurium (strain LT2 / SGSC1412 / ATCC 700720) protein is DNA-directed RNA polymerase subunit beta.